Consider the following 196-residue polypeptide: Aequorin-2 (196 aa).

The propeptide occupies 1–7; it reads MTSKQYS. EF-hand domains are found at residues 18 to 53, 54 to 108, 117 to 146, and 147 to 182; these read RWIGRHKHMFNFLDVNHNGKISLDEMVYKASDIVIN, NLGA…AKNE, DALFDIVDKDQNGAITLDEWKAYTKAAGII, and QSSEDCEETFRVCDIDESGQLDVDEMTRQHLGFWYT. Residues Asp31, Asn33, Asn35, Lys37, and Glu42 each coordinate Ca(2+). May interact with the chromophore regions lie at residues 47–57, 62–72, and 107–117; these read ASDIVINNLGA, AKRHKDAVEAF, and NEPTLIRIWGD. Ca(2+) is bound by residues Asp124, Asp126, Asn128, Glu135, Asp160, Asp162, Ser164, Gln166, and Glu171.

This sequence belongs to the aequorin family. In terms of processing, the reduction of the disulfide bond is necessary to regenerate aequorin from apoaequorin.

Ca(2+)-dependent bioluminescence photoprotein. Displays an emission peak at 470 nm (blue light). Trace amounts of calcium ion trigger the intramolecular oxidation of the chromophore, coelenterazine into coelenteramide and CO(2) with the concomitant emission of light. This is Aequorin-2 from Aequorea victoria (Water jellyfish).